The following is a 295-amino-acid chain: Putative clathrin assembly protein At5g65370 (295 aa).

One can recognise an ENTH domain in the interval Cys26–Pro169.

It is found in the membrane. Its subcellular location is the clathrin-coated pit. It localises to the golgi apparatus. The protein resides in the cytoplasmic vesicle. The protein localises to the clathrin-coated vesicle. In Arabidopsis thaliana (Mouse-ear cress), this protein is Putative clathrin assembly protein At5g65370.